Reading from the N-terminus, the 132-residue chain is Translation initiation factor 5A (132 aa).

Lys36 is modified (hypusine).

It belongs to the eIF-5A family.

The protein resides in the cytoplasm. Functions by promoting the formation of the first peptide bond. In Thermofilum pendens (strain DSM 2475 / Hrk 5), this protein is Translation initiation factor 5A (eIF5A).